Reading from the N-terminus, the 273-residue chain is Mannose 6-phosphate receptor-like protein 1 (273 aa).

The N-terminal stretch at 1–24 is a signal peptide; the sequence is MPTQLQRPLARLLALALLVLLARA. Residues 25–176 are Lumenal-facing; sequence AEDEPPFCAV…AAARAAGDRS (152 aa). An MRH domain is found at 30–168; sequence PFCAVRNRST…EVRSVHACAA (139 aa). 3 disulfide bridges follow: C32/C75, C120/C154, and C135/C166. 4 N-linked (GlcNAc...) asparagine glycosylation sites follow: N36, N51, N69, and N153. A helical membrane pass occupies residues 177 to 194; sequence VLGIFAAILLVFAAVELA. At 195-273 the chain is on the cytoplasmic side; sequence RRCCAAPLRR…DSLDVRSSGA (79 aa).

It belongs to the MRL1/IGF2R family.

The protein localises to the golgi apparatus. The protein resides in the trans-Golgi network membrane. Its subcellular location is the endosome membrane. Functionally, sorting receptor involved in the transport of vacuolar enzymes from the Golgi complex to the vacuole. The sequence is that of Mannose 6-phosphate receptor-like protein 1 (MRL1) from Eremothecium gossypii (strain ATCC 10895 / CBS 109.51 / FGSC 9923 / NRRL Y-1056) (Yeast).